We begin with the raw amino-acid sequence, 876 residues long: Alanine--tRNA ligase (876 aa).

Residues H560, H564, C662, and H666 each coordinate Zn(2+).

Belongs to the class-II aminoacyl-tRNA synthetase family. Zn(2+) is required as a cofactor.

It is found in the cytoplasm. It catalyses the reaction tRNA(Ala) + L-alanine + ATP = L-alanyl-tRNA(Ala) + AMP + diphosphate. Its function is as follows. Catalyzes the attachment of alanine to tRNA(Ala) in a two-step reaction: alanine is first activated by ATP to form Ala-AMP and then transferred to the acceptor end of tRNA(Ala). Also edits incorrectly charged Ser-tRNA(Ala) and Gly-tRNA(Ala) via its editing domain. The protein is Alanine--tRNA ligase of Synechococcus elongatus (strain ATCC 33912 / PCC 7942 / FACHB-805) (Anacystis nidulans R2).